The chain runs to 561 residues: Delta(24)-sterol reductase (561 aa).

The Lumenal segment spans residues 1-25 (MSDLQTPLVRPKRKKTWVDYFVKFR). Position 2 is a phosphoserine (S2). Residues 26–46 (WIIVIFIVLPFSATFYFLIYL) form a helical; Signal-anchor membrane-spanning segment. At 47-561 (GDMWSESKSF…HLETAYAEAD (515 aa)) the chain is on the cytoplasmic side. Residues 49–232 (MWSESKSFEK…VAAEIRLIKV (184 aa)) enclose the FAD-binding PCMH-type domain. Residues 518–539 (CRKKYRAIGTFMSVYYKSKKGR) are interaction with calmodulin.

Belongs to the DIMINUTO family. Interacts with calmodulin.

Its subcellular location is the microsome membrane. The enzyme catalyses lathosterol + NADP(+) = 5alpha-cholesta-7,24-dien-3beta-ol + NADPH + H(+). Functionally, plays a critical role in the general process of plant cell elongation. Involved in the synthesis of campesterol, an early precursor of brassinolide. Required for the conversion of 24-methylenecholesterol to campesterol and for the conversion of isofucosterol to sitosterol. Necessary for both the isomerization and reduction of 24-methylenecholesterol. Regulates indirectly phytochrome-mediated light responses through the modulation of brassinosteroid biosynthesis. This is Delta(24)-sterol reductase (DIM) from Arabidopsis thaliana (Mouse-ear cress).